The chain runs to 567 residues: Urease subunit alpha (567 aa).

Residues histidine 134, histidine 136, and lysine 217 each coordinate Ni(2+). N6-carboxylysine is present on lysine 217. Position 219 (histidine 219) interacts with substrate. Ni(2+)-binding residues include histidine 246 and histidine 272. Histidine 320 (proton donor) is an active-site residue. Aspartate 360 provides a ligand contact to Ni(2+).

This sequence belongs to the metallo-dependent hydrolases superfamily. Urease alpha subunit family. As to quaternary structure, heterotrimer of UreA (gamma), UreB (beta) and UreC (alpha) subunits. Three heterotrimers associate to form the active enzyme. The cofactor is Ni cation. Carboxylation allows a single lysine to coordinate two nickel ions.

The protein resides in the cytoplasm. It catalyses the reaction urea + 2 H2O + H(+) = hydrogencarbonate + 2 NH4(+). Its pathway is nitrogen metabolism; urea degradation; CO(2) and NH(3) from urea (urease route): step 1/1. The chain is Urease subunit alpha from Pseudomonas putida (strain GB-1).